Here is a 69-residue protein sequence, read N- to C-terminus: Large ribosomal subunit protein bL28 (69 aa).

Residues 1–27 (MSRRCSVSGKGPLVGNNVSHANNKTKR) are disordered.

It belongs to the bacterial ribosomal protein bL28 family.

The chain is Large ribosomal subunit protein bL28 from Sulfurovum sp. (strain NBC37-1).